A 460-amino-acid polypeptide reads, in one-letter code: Argininosuccinate lyase (460 aa).

Belongs to the lyase 1 family. Argininosuccinate lyase subfamily.

The protein localises to the cytoplasm. The catalysed reaction is 2-(N(omega)-L-arginino)succinate = fumarate + L-arginine. Its pathway is amino-acid biosynthesis; L-arginine biosynthesis; L-arginine from L-ornithine and carbamoyl phosphate: step 3/3. The chain is Argininosuccinate lyase from Prosthecochloris aestuarii (strain DSM 271 / SK 413).